The following is a 185-amino-acid chain: Ribosome-recycling factor (185 aa).

This sequence belongs to the RRF family.

It is found in the cytoplasm. Responsible for the release of ribosomes from messenger RNA at the termination of protein biosynthesis. May increase the efficiency of translation by recycling ribosomes from one round of translation to another. The sequence is that of Ribosome-recycling factor from Streptococcus pyogenes serotype M1.